Here is a 279-residue protein sequence, read N- to C-terminus: Oxygen-dependent coproporphyrinogen-III oxidase (279 aa).

Ser102 contributes to the substrate binding site. His106 and His116 together coordinate a divalent metal cation. The Proton donor role is filled by His116. 118–120 (NTR) is a binding site for substrate. A divalent metal cation contacts are provided by His149 and His179. The important for dimerization stretch occupies residues 244–279 (YVEFNLLYDRGTKFGLMTDGNVEAILMSLPPEVKFN).

This sequence belongs to the aerobic coproporphyrinogen-III oxidase family. As to quaternary structure, homodimer. A divalent metal cation is required as a cofactor.

It localises to the cytoplasm. It carries out the reaction coproporphyrinogen III + O2 + 2 H(+) = protoporphyrinogen IX + 2 CO2 + 2 H2O. The protein operates within porphyrin-containing compound metabolism; protoporphyrin-IX biosynthesis; protoporphyrinogen-IX from coproporphyrinogen-III (O2 route): step 1/1. Functionally, involved in the heme biosynthesis. Catalyzes the aerobic oxidative decarboxylation of propionate groups of rings A and B of coproporphyrinogen-III to yield the vinyl groups in protoporphyrinogen-IX. The chain is Oxygen-dependent coproporphyrinogen-III oxidase from Rickettsia akari (strain Hartford).